The following is a 354-amino-acid chain: Putative succinyl-diaminopimelate desuccinylase DapE (354 aa).

Histidine 69 serves as a coordination point for Zn(2+). Aspartate 71 is an active-site residue. Residue aspartate 95 coordinates Zn(2+). Glutamate 125 acts as the Proton acceptor in catalysis. Zn(2+) contacts are provided by glutamate 126, glutamate 154, and histidine 330.

This sequence belongs to the peptidase M20A family. In terms of assembly, homodimer. It depends on Zn(2+) as a cofactor. The cofactor is Co(2+).

It carries out the reaction N-succinyl-(2S,6S)-2,6-diaminopimelate + H2O = (2S,6S)-2,6-diaminopimelate + succinate. It functions in the pathway amino-acid biosynthesis; L-lysine biosynthesis via DAP pathway; LL-2,6-diaminopimelate from (S)-tetrahydrodipicolinate (succinylase route): step 3/3. Catalyzes the hydrolysis of N-succinyl-L,L-diaminopimelic acid (SDAP), forming succinate and LL-2,6-diaminoheptanedioate (DAP), an intermediate involved in the bacterial biosynthesis of lysine and meso-diaminopimelic acid. The protein is Putative succinyl-diaminopimelate desuccinylase DapE (dapE) of Mycobacterium tuberculosis (strain CDC 1551 / Oshkosh).